The chain runs to 255 residues: Thiazole synthase (255 aa).

Residue K95 is the Schiff-base intermediate with DXP of the active site. Residues G156, A182 to G183, and N204 to T205 each bind 1-deoxy-D-xylulose 5-phosphate.

Belongs to the ThiG family. In terms of assembly, homotetramer. Forms heterodimers with either ThiH or ThiS.

It localises to the cytoplasm. The catalysed reaction is [ThiS sulfur-carrier protein]-C-terminal-Gly-aminoethanethioate + 2-iminoacetate + 1-deoxy-D-xylulose 5-phosphate = [ThiS sulfur-carrier protein]-C-terminal Gly-Gly + 2-[(2R,5Z)-2-carboxy-4-methylthiazol-5(2H)-ylidene]ethyl phosphate + 2 H2O + H(+). Its pathway is cofactor biosynthesis; thiamine diphosphate biosynthesis. In terms of biological role, catalyzes the rearrangement of 1-deoxy-D-xylulose 5-phosphate (DXP) to produce the thiazole phosphate moiety of thiamine. Sulfur is provided by the thiocarboxylate moiety of the carrier protein ThiS. In vitro, sulfur can be provided by H(2)S. The sequence is that of Thiazole synthase from Vibrio campbellii (strain ATCC BAA-1116).